A 130-amino-acid polypeptide reads, in one-letter code: Methylglyoxal synthase (130 aa).

The MGS-like domain occupies 1-130 (MMTRPRIALI…AELSRVEAQP (130 aa)). Substrate contacts are provided by residues H12, K16, 38–41 (TGTT), and 58–59 (SG). Catalysis depends on D64, which acts as the Proton donor/acceptor. H91 serves as a coordination point for substrate.

It belongs to the methylglyoxal synthase family.

The catalysed reaction is dihydroxyacetone phosphate = methylglyoxal + phosphate. Its function is as follows. Catalyzes the formation of methylglyoxal from dihydroxyacetone phosphate. This is Methylglyoxal synthase from Cupriavidus pinatubonensis (strain JMP 134 / LMG 1197) (Cupriavidus necator (strain JMP 134)).